We begin with the raw amino-acid sequence, 222 residues long: Salivary anticoagulant protein P23 (222 aa).

The N-terminal stretch at 1–17 (MLTVSLLTLSLAAYASA) is a signal peptide. 4 N-linked (GlcNAc...) asparagine glycosylation sites follow: Asn56, Asn73, Asn109, and Asn114.

As to expression, salivary gland (at protein level). Adult midgut.

It localises to the secreted. Inhibits host coagulation by delaying thrombin generation and reducing endogenous thrombin potential (ETP). The chain is Salivary anticoagulant protein P23 from Ixodes scapularis (Black-legged tick).